The sequence spans 218 residues: Small ribosomal subunit protein uS3c (218 aa).

Residues 47 to 118 (VQKNIRISSG…KLNIAITRIS (72 aa)) form the KH type-2 domain.

Belongs to the universal ribosomal protein uS3 family. Part of the 30S ribosomal subunit.

The protein resides in the plastid. Its subcellular location is the chloroplast. This is Small ribosomal subunit protein uS3c (rps3) from Arabis hirsuta (Hairy rock-cress).